Reading from the N-terminus, the 395-residue chain is ATP phosphoribosyltransferase regulatory subunit (395 aa).

Belongs to the class-II aminoacyl-tRNA synthetase family. HisZ subfamily. Heteromultimer composed of HisG and HisZ subunits.

The protein resides in the cytoplasm. The protein operates within amino-acid biosynthesis; L-histidine biosynthesis; L-histidine from 5-phospho-alpha-D-ribose 1-diphosphate: step 1/9. Functionally, required for the first step of histidine biosynthesis. May allow the feedback regulation of ATP phosphoribosyltransferase activity by histidine. The chain is ATP phosphoribosyltransferase regulatory subunit from Ectopseudomonas mendocina (strain ymp) (Pseudomonas mendocina).